A 177-amino-acid chain; its full sequence is Large ribosomal subunit protein eL20 (177 aa).

This sequence belongs to the eukaryotic ribosomal protein eL20 family.

This Spodoptera frugiperda (Fall armyworm) protein is Large ribosomal subunit protein eL20 (RpL18A).